Here is a 953-residue protein sequence, read N- to C-terminus: Translation initiation factor IF-2 (953 aa).

2 disordered regions span residues 52-247 (KASK…LAEL) and 279-363 (TKLK…TERK). Basic and acidic residues-rich tracts occupy residues 80 to 89 (TGSEHVEKTQ), 98 to 111 (FKAEREARAKEQAA), and 140 to 188 (QGDK…ENHK). Positions 191–207 (RFTNQKKQGRQEPQSKS) are enriched in polar residues. Residues 229–247 (RQSETRFRAQQEAKRLAEL) are compositionally biased toward basic and acidic residues. Positions 282 to 291 (KSSNISAKST) are enriched in polar residues. The segment covering 300–317 (ARPEKNRELTHHSQEGQK) has biased composition (basic and acidic residues). A compositionally biased stretch (low complexity) spans 322-338 (SWNSQNQVRNQKNSNWN). Basic residues predominate over residues 339 to 348 (KNKKTKKGKN). The region spanning 454–623 (ERAPVVTIMG…LLVAEVEELK (170 aa)) is the tr-type G domain. A G1 region spans residues 463-470 (GHVDHGKT). GTP is bound at residue 463 to 470 (GHVDHGKT). The segment at 488–492 (GITQH) is G2. The G3 stretch occupies residues 509–512 (DTPG). GTP contacts are provided by residues 509-513 (DTPGH) and 563-566 (NKID). Positions 563 to 566 (NKID) are G4. Positions 599-601 (SAK) are G5.

The protein belongs to the TRAFAC class translation factor GTPase superfamily. Classic translation factor GTPase family. IF-2 subfamily.

It localises to the cytoplasm. In terms of biological role, one of the essential components for the initiation of protein synthesis. Protects formylmethionyl-tRNA from spontaneous hydrolysis and promotes its binding to the 30S ribosomal subunits. Also involved in the hydrolysis of GTP during the formation of the 70S ribosomal complex. The sequence is that of Translation initiation factor IF-2 from Streptococcus pyogenes serotype M5 (strain Manfredo).